A 209-amino-acid polypeptide reads, in one-letter code: Ribosomal RNA large subunit methyltransferase E (209 aa).

S-adenosyl-L-methionine contacts are provided by G63, W65, D83, D99, and D124. The active-site Proton acceptor is the K164.

It belongs to the class I-like SAM-binding methyltransferase superfamily. RNA methyltransferase RlmE family.

The protein localises to the cytoplasm. The enzyme catalyses uridine(2552) in 23S rRNA + S-adenosyl-L-methionine = 2'-O-methyluridine(2552) in 23S rRNA + S-adenosyl-L-homocysteine + H(+). Functionally, specifically methylates the uridine in position 2552 of 23S rRNA at the 2'-O position of the ribose in the fully assembled 50S ribosomal subunit. This chain is Ribosomal RNA large subunit methyltransferase E, found in Shewanella sp. (strain MR-7).